Consider the following 307-residue polypeptide: Cyclin-dependent kinase 5 activator 1 (307 aa).

Gly-2 carries N-myristoyl glycine lipidation. Residue Ser-8 is modified to Phosphoserine; by CDK5. The tract at residues Thr-97–Ile-133 is disordered. Residues Gln-100 to Pro-110 show a composition bias toward pro residues. Residues Ser-112–Val-125 show a composition bias toward polar residues. A Phosphothreonine; by CDK5 modification is found at Thr-138.

It belongs to the cyclin-dependent kinase 5 activator family. Heterodimer composed of a catalytic subunit CDK5 and a regulatory subunit CDK5R1 (p25) and macromolecular complex composed of at least CDK5, CDK5R1 (p35) and CDK5RAP1 or CDK5RAP2 or CDK5RAP3. Only the heterodimer shows kinase activity. Interacts with EPHA4 and NGEF; may mediate the activation of NGEF by EPHA4. Interacts with RASGRF2. The complex p35/CDK5 interacts with CLOCK. In terms of processing, the p35 form is proteolytically cleaved by calpain, giving rise to the p25 form. P35 has a 5 to 10 fold shorter half-life compared to p25. The conversion results in deregulation of the CDK5 kinase: p25/CDK5 kinase displays an increased and altered tau phosphorylation in comparison to the p35/CDK5 kinase in vivo. Post-translationally, myristoylated. A proper myristoylation signal is essential for the proper distribution of p35. Phosphorylation at Ser-8 and Thr-138 by CDK5 prevents calpain-mediated proteolysis. In terms of processing, ubiquitinated, leading to its degradation: degradation of p35 by proteasome results in down-regulation of CDK5 activity. During this process, CDK5 phosphorylates p35 and induces its ubiquitination and subsequent degradation. Ubiquitinated by the CRL2(FEM1B) complex, which recognizes the -Gly-Leu-Asp-Arg C-degron at the C-terminus, leading to its degradation. In terms of tissue distribution, brain and neuron specific.

The protein localises to the cell membrane. Its subcellular location is the cell projection. It is found in the neuron projection. It localises to the nucleus. The protein resides in the cytoplasm. The protein localises to the perinuclear region. Its subcellular location is the perikaryon. In terms of biological role, p35 is a neuron specific activator of CDK5. The complex p35/CDK5 is required for neurite outgrowth and cortical lamination. Involved in dendritic spine morphogenesis by mediating the EFNA1-EPHA4 signaling. Activator of TPKII. The complex p35/CDK5 participates in the regulation of the circadian clock by modulating the function of CLOCK protein: phosphorylates CLOCK at 'Thr-451' and 'Thr-461' and regulates the transcriptional activity of the CLOCK-BMAL1 heterodimer in association with altered stability and subcellular distribution. This chain is Cyclin-dependent kinase 5 activator 1 (Cdk5r1), found in Rattus norvegicus (Rat).